A 165-amino-acid polypeptide reads, in one-letter code: MKTPRLPIAIQQAVMRRLRENLAQANLKLNRHYPEPKLVYTQRGTSAGTAWLESYEIRLNPVLLMENVDAFIAEVVPHELAHLLVWKHFGRKAPHGKEWKWMMESVLGVPARRTHQFELQSVRRNTFPYHCQCQQHQLTVRRHNRVVRGEAVYRCVHCGEPLVAG.

The region spanning 20–163 (ENLAQANLKL…RCVHCGEPLV (144 aa)) is the SprT-like domain. Position 78 (H78) interacts with Zn(2+). The active site involves E79. Residue H82 participates in Zn(2+) binding.

It belongs to the SprT family. It depends on Zn(2+) as a cofactor.

The protein localises to the cytoplasm. The polypeptide is Protein SprT (Salmonella arizonae (strain ATCC BAA-731 / CDC346-86 / RSK2980)).